The primary structure comprises 436 residues: METTLGSYARTLSLGMLVPSAICLLAGTFGLLGGSSIALWVVIAVSLLGVVGGVKIGGSARRMAGDLSTAIHVLSRSASGDLNARILDVRGSGGIGALQHSINRLLDLAEAFGKEAFAAVESANHGRYYRRIITTGLRGDFVLYAKTINQALKRMEARDAEFIAFANNQVKPVVNAVAAAATELEASSGAMSAQSTDTSHQAMTVAAAAEQASVNVQAVASAVEEFSASIKEISTQVHRAAAVASEAAGVASRTDTTVHGLSDAAQRIGAIVSLINDIAAQTNLLALNATIEAARAGDAGKGFAVVANEVKNLANQTARATEDITSQVAHIQEVAAEAIKAIQEITRTVSQIEETSSAVAGAVEEQNAVTVEIARNVAEAATGTSSVSSAIITVQATAAEATESAGQVADAASELSRQSENLSREVDGFIARIGGR.

The Cytoplasmic portion of the chain corresponds to 1–8; that stretch reads METTLGSY. A helical transmembrane segment spans residues 9-29; sequence ARTLSLGMLVPSAICLLAGTF. G30 is a topological domain (periplasmic). The chain crosses the membrane as a helical span at residues 31–51; that stretch reads LLGGSSIALWVVIAVSLLGVV. At 52-436 the chain is on the cytoplasmic side; it reads GGVKIGGSAR…DGFIARIGGR (385 aa). The Methyl-accepting transducer domain occupies 180-416; the sequence is AATELEASSG…QVADAASELS (237 aa). At Q211 the chain carries Glutamate methyl ester (Gln). E225 carries the glutamate methyl ester (Glu) modification. The segment at 321–436 is required for interaction with MamK and to respond to the magnetic field; the sequence is TEDITSQVAH…DGFIARIGGR (116 aa).

This sequence belongs to the methyl-accepting chemotaxis (MCP) protein family. Interacts with MamK at cell poles and septa.

Its subcellular location is the cell inner membrane. In terms of biological role, probable methyl-accepting taxis protein. May be the receptor that senses the torque generated from the interaction between the magnetosome dipole moment and the external magnetic field. Overproduction interferes with magnetotaxis, cells respond more slowly to changes in the magnetic field; requires the MamK-interacting C-terminus of the protein. The effect of magnetic sensing is to control flagellar rotation. Chemotactic-signal transducers respond to changes in the concentration of attractants and repellents in the environment, transduce a signal from the outside to the inside of the cell, and facilitate sensory adaptation through variation of methylation levels. Attractants increase the level of methylation while repellents decrease the level of methylation. In Paramagnetospirillum magneticum (strain ATCC 700264 / AMB-1) (Magnetospirillum magneticum), this protein is Methyl-accepting chemotaxis protein Amb0994.